Reading from the N-terminus, the 180-residue chain is Lysine-specific demethylase 5C (180 aa).

The tract at residues 116–159 (PEESLAYSSDAGEGAGHIPKVQGLLENGDSVTSPEKVATEEGSG) is disordered. S148 is modified (phosphoserine).

The protein belongs to the JARID1 histone demethylase family. Part of two distinct complexes, one containing E2F6, and the other containing REST. Interacts with ZMYND8. The cofactor is Fe(2+).

The protein localises to the nucleus. It carries out the reaction N(6),N(6),N(6)-trimethyl-L-lysyl(4)-[histone H3] + 3 2-oxoglutarate + 3 O2 = L-lysyl(4)-[histone H3] + 3 formaldehyde + 3 succinate + 3 CO2. Its function is as follows. Histone demethylase that specifically demethylates 'Lys-4' of histone H3, thereby playing a central role in histone code. Does not demethylate histone H3 'Lys-9', H3 'Lys-27', H3 'Lys-36', H3 'Lys-79' or H4 'Lys-20'. Demethylates trimethylated and dimethylated but not monomethylated H3 'Lys-4'. Participates in transcriptional repression of neuronal genes by recruiting histone deacetylases and REST at neuron-restrictive silencer elements. Represses the CLOCK-BMAL1 heterodimer-mediated transcriptional activation of the core clock component PER2. This Cricetulus griseus (Chinese hamster) protein is Lysine-specific demethylase 5C (KDM5C).